We begin with the raw amino-acid sequence, 361 residues long: S-adenosylmethionine:tRNA ribosyltransferase-isomerase (361 aa).

This sequence belongs to the QueA family. As to quaternary structure, monomer.

Its subcellular location is the cytoplasm. The catalysed reaction is 7-aminomethyl-7-carbaguanosine(34) in tRNA + S-adenosyl-L-methionine = epoxyqueuosine(34) in tRNA + adenine + L-methionine + 2 H(+). It participates in tRNA modification; tRNA-queuosine biosynthesis. Its function is as follows. Transfers and isomerizes the ribose moiety from AdoMet to the 7-aminomethyl group of 7-deazaguanine (preQ1-tRNA) to give epoxyqueuosine (oQ-tRNA). The chain is S-adenosylmethionine:tRNA ribosyltransferase-isomerase from Afipia carboxidovorans (strain ATCC 49405 / DSM 1227 / KCTC 32145 / OM5) (Oligotropha carboxidovorans).